We begin with the raw amino-acid sequence, 540 residues long: Medium/long-chain-fatty-acid--[acyl-carrier-protein] ligase FadD10 (540 aa).

A Mg(2+)-binding site is contributed by threonine 177. ATP contacts are provided by isoleucine 226, valine 316, and serine 320. Glutamate 321 lines the Mg(2+) pocket. An ATP-binding site is contributed by aspartate 408.

This sequence belongs to the ATP-dependent AMP-binding enzyme family. In terms of assembly, homodimer. Mg(2+) is required as a cofactor.

The protein localises to the cytoplasm. It carries out the reaction a medium-chain fatty acid + holo-[ACP] + ATP = a medium-chain fatty acyl-[ACP] + AMP + diphosphate. The catalysed reaction is a medium-chain fatty acid + ATP + H(+) = a medium-chain fatty acyl-AMP + diphosphate. The enzyme catalyses a medium-chain fatty acyl-AMP + holo-[ACP] = a medium-chain fatty acyl-[ACP] + AMP + H(+). It catalyses the reaction a long-chain fatty acid + holo-[ACP] + ATP = a long-chain fatty acyl-[ACP] + AMP + diphosphate. It carries out the reaction a long-chain fatty acid + ATP + H(+) = a long-chain fatty acyl-AMP + diphosphate. The catalysed reaction is a long-chain fatty acyl-AMP + holo-[ACP] = a long-chain fatty acyl-[ACP] + AMP + H(+). The enzyme catalyses a (2E)-enoyl fatty acid + holo-[ACP] + ATP = a (2E)-enoyl-[ACP] + AMP + diphosphate. It catalyses the reaction a (2E)-enoyl fatty acid + ATP + H(+) = a (2E)-2-fatty-enoyl-AMP + diphosphate. It carries out the reaction a (2E)-2-fatty-enoyl-AMP + holo-[ACP] = a (2E)-enoyl-[ACP] + AMP + H(+). The catalysed reaction is a (3R)-3-isocyanyl-fatty acid + holo-[ACP] + ATP = a (3R)-3-isocyanyl-fatty acyl-[ACP] + AMP + diphosphate. The enzyme catalyses a (3R)-3-isocyanyl-fatty acid + ATP + H(+) = a (3R)-3-isocyanyl-fatty acyl-AMP + diphosphate. It catalyses the reaction a (3R)-3-isocyanyl-fatty acyl-AMP + holo-[ACP] = a (3R)-3-isocyanyl-fatty acyl-[ACP] + AMP + H(+). It participates in lipid metabolism; fatty acid metabolism. Acyl:acyl-carrier protein ligase involved in the biosynthesis of a unique class of isonitrile lipopeptides (INLPs) that seem to function as virulence factors in M.tuberculosis and to play a role in metal acquisition. Catalyzes the activation of medium/long-chain fatty acids as acyl-adenylates (acyl-AMP), which are then transferred to the phosphopantetheine arm of the acyl-carrier protein (ACP) MT0109. Acts twice during the INLP pathway, catalyzing the activation of a (2E)-enoyl fatty acid as well as the corresponding (3R)-3-isocyanyl-fatty acid as acyl-adenylates (acyl-AMP), and then the acyl transfer to the dedicated acyl-carrier protein MT0109. The protein is Medium/long-chain-fatty-acid--[acyl-carrier-protein] ligase FadD10 (fadD10) of Mycobacterium tuberculosis (strain CDC 1551 / Oshkosh).